The primary structure comprises 1066 residues: Hemoglobin and hemoglobin-haptoglobin-binding protein C (1066 aa).

The signal sequence occupies residues 1-24 (MTNFKFTLLARSIAFALNASTAYA). Tandem repeats lie at residues 26 to 29 (QPTN), 30 to 33 (QPTN), 34 to 37 (QPTN), 38 to 41 (QPTN), 42 to 45 (QPTN), 46 to 49 (QPTN), and 50 to 53 (QPTN). The tract at residues 26 to 53 (QPTNQPTNQPTNQPTNQPTNQPTNQPTN) is 7 X 4 AA tandem repeats of Q-P-T-N. Over residues 26 to 54 (QPTNQPTNQPTNQPTNQPTNQPTNQPTNQ) the composition is skewed to low complexity. The interval 26 to 57 (QPTNQPTNQPTNQPTNQPTNQPTNQPTNQDSN) is disordered. A TonB box motif is present at residues 63-70 (EQINVSGS). The region spanning 66-200 (NVSGSTETIN…LGGSVIFETK (135 aa)) is the TBDR plug domain. The TBDR beta-barrel domain occupies 208 to 1066 (DKDYYVSYKR…NYRMSVQFEF (859 aa)). Residues 1049–1066 (NRLYAPGRNYRMSVQFEF) carry the TonB C-terminal box motif.

This sequence belongs to the TonB-dependent receptor family. Hemoglobin/haptoglobin binding protein subfamily.

It is found in the cell outer membrane. In terms of biological role, acts as a receptor for hemoglobin or the hemoglobin/haptoglobin complex of the human host and is required for heme uptake. The protein is Hemoglobin and hemoglobin-haptoglobin-binding protein C (hgpC) of Haemophilus influenzae.